The following is a 585-amino-acid chain: MAGUK p55 subfamily member 3 (585 aa).

L27 domains are found at residues 6 to 60 (EDSG…ERQS) and 61 to 118 (PTPV…FDPV). One can recognise a PDZ domain in the interval 137-212 (IVRLVKNKEP…LAQSQGSITL (76 aa)). The SH3 domain maps to 226–296 (ESKVFMRALF…PSKGFQERRL (71 aa)). S307 is subject to Phosphoserine. The Guanylate kinase-like domain maps to 385–570 (PRLVVLIGSL…AYSQLKVVLE (186 aa)).

It belongs to the MAGUK family. As to quaternary structure, interacts with HTR2C; this interaction stabilizes the receptor at the plasma membrane and prevents the desensitization of the HTR2C receptor-mediated calcium response. Interacts with HTR2A. Interacts with HTR4. Interacts (via PDZ domain) with CADM1 (via C-terminus)Interacts (via PDZ domain) with CADM1; this interaction connects CADM1 with DLG1. Interacts (via Guanylate kinase-like domain) with PALS1. Interacts with DLG1 (via N-terminus); this interaction connects CADM1 with DLG1 and links CADM1 with the regulatory subunit of phosphoinositide-3-kinase (PI3K) by forming a multiprotein complex and participates in cell spreading. Expressed in retina (at protein level) at the subapical region (SAR) adjacent to adherens junctions at the OLM, and at the OPL.

The protein resides in the cell membrane. Its subcellular location is the apical cell membrane. It is found in the cell junction. The protein localises to the adherens junction. Participates in cell spreading through the phosphoinositide-3-kinase (PI3K) pathway by connecting CADM1 to DLG1 and the regulatory subunit of phosphoinositide-3-kinase (PI3K). Stabilizes HTR2C at the plasma membrane and prevents its desensitization. May participates in the maintenance of adherens junctions. The chain is MAGUK p55 subfamily member 3 from Homo sapiens (Human).